A 215-amino-acid chain; its full sequence is High mobility group protein B1 (215 aa).

Positions 9–79 (PRGKMSSYAF…RYEKEMKNYV (71 aa)) form a DNA-binding region, HMG box 1. Cysteine 23 is subject to Cysteine sulfonic acid (-SO3H); alternate. A disulfide bridge connects residues cysteine 23 and cysteine 45. An NLS 1 region spans residues 27–43 (HKKKHPDASVNFSEFSK). A Nuclear localization signal (NLS) 1 motif is present at residues 27–43 (HKKKHPDASVNFSEFSK). The residue at position 45 (cysteine 45) is a Cysteine sulfonic acid (-SO3H); alternate. Residues 75-95 (MKNYVPPKGETKKKFKDPNAP) form a disordered region. The segment covering 83-94 (GETKKKFKDPNA) has biased composition (basic and acidic residues). The HMG box 2 DNA-binding region spans 95-163 (PKRPPSAFFL…KYEKDIAAYR (69 aa)). Cysteine 106 carries the post-translational modification Cysteine sulfonic acid (-SO3H). Residues 166–179 (GKVDAGKKVVAKAE) show a composition bias toward basic and acidic residues. Residues 166–215 (GKVDAGKKVVAKAEKSKKKKEEEEDEDEDEEDEEDEEEEEEEEEDDDDDE) are disordered. The NLS 2 stretch occupies residues 178 to 184 (AEKSKKK). The short motif at 178 to 184 (AEKSKKK) is the Nuclear localization signal (NLS) 2 element. The segment covering 187–215 (EEEDEDEDEEDEEDEEEEEEEEEDDDDDE) has biased composition (acidic residues). The segment at 196-210 (EDEEDEEEEEEEEED) is involved in intramolecular interaction with K-3. Residues 211–215 (DDDDE) form an involved in interaction with histone H3 region.

The protein belongs to the HMGB family. Post-translationally, reduction/oxidation of cysteine residues Cys-23, Cys-45 and Cys-106 and a possible intramolecular disulfide bond involving Cys-23 and Cys-45 give rise to different redox forms with specific functional activities: 1- fully reduced HMGB1 (HMGB1C23hC45hC106h), 2- disulfide HMGB1 (HMGB1C23-C45C106h) and 3- sulfonyl HMGB1 (HMGB1C23soC45soC106so).

It localises to the nucleus. The protein resides in the chromosome. It is found in the cytoplasm. Its subcellular location is the secreted. In terms of biological role, multifunctional redox sensitive protein with various roles in different cellular compartments. Nuclear functions are attributed to fully reduced HGMB1. Associates with chromatin and binds DNA with a preference to non-canonical DNA structures such as single-stranded DNA, DNA-containing cruciforms or bent structures, supercoiled DNA and ZDNA. Can bent DNA and enhance DNA flexibility by looping thus providing a mechanism to promote activities on various gene promoters. Can restructure the canonical nucleosome. Proposed to be an universal biosensor for nucleic acids. May promote inflammatory response to sterile and infectious signals and may be involved in the coordination and integration of innate and adaptive immune responses. In the cytoplasm may function as sensor and/or chaperone for immunogenic nucleic acids, and mediate autophagy. May act as danger associated molecular pattern (DAMP) molecule that amplifies immune responses during tissue injury. This chain is High mobility group protein B1 (HMGB1), found in Gallus gallus (Chicken).